The primary structure comprises 476 residues: Cytosolic iron-sulfur assembly component 3 (476 aa).

Position 2 is an N-acetylalanine (alanine 2). The [4Fe-4S] cluster site is built by cysteine 24, cysteine 71, cysteine 74, cysteine 77, cysteine 190, cysteine 246, cysteine 395, and cysteine 399.

The protein belongs to the NARF family. External component of the CIA complex. In the CIA complex, interacts directly with CIAO1 and MMS19.

Component of the cytosolic iron-sulfur protein assembly (CIA) complex, a multiprotein complex that mediates the incorporation of iron-sulfur cluster into extramitochondrial Fe/S proteins. Seems to negatively regulate the level of HIF1A expression, although this effect could be indirect. This is Cytosolic iron-sulfur assembly component 3 from Rattus norvegicus (Rat).